The chain runs to 303 residues: Monoglyceride lipase (303 aa).

T10 bears the Phosphothreonine mark. 3'-nitrotyrosine is present on Y58. Catalysis depends on S122, which acts as the Nucleophile. Residues D239 and H269 each act as charge relay system in the active site.

It belongs to the AB hydrolase superfamily. Monoacylglycerol lipase family. Homodimer. Detected in adipose tissue, lung, liver, kidney, brain and heart.

The protein localises to the cytoplasm. It is found in the cytosol. It localises to the membrane. It catalyses the reaction Hydrolyzes glycerol monoesters of long-chain fatty acids.. It carries out the reaction a 1-acylglycerol + H2O = glycerol + a fatty acid + H(+). The enzyme catalyses a 2-acylglycerol + H2O = glycerol + a fatty acid + H(+). The catalysed reaction is 1-octanoylglycerol + H2O = octanoate + glycerol + H(+). It catalyses the reaction 2-(5Z,8Z,11Z,14Z-eicosatetraenoyl)-glycerol + H2O = glycerol + (5Z,8Z,11Z,14Z)-eicosatetraenoate + H(+). It carries out the reaction 1-decanoylglycerol + H2O = decanoate + glycerol + H(+). The enzyme catalyses 1-dodecanoylglycerol + H2O = dodecanoate + glycerol + H(+). The catalysed reaction is 1-tetradecanoylglycerol + H2O = tetradecanoate + glycerol + H(+). It catalyses the reaction 2-hexadecanoylglycerol + H2O = glycerol + hexadecanoate + H(+). It carries out the reaction 1-(9Z-octadecenoyl)-glycerol + H2O = glycerol + (9Z)-octadecenoate + H(+). The enzyme catalyses 2-(9Z-octadecenoyl)-glycerol + H2O = glycerol + (9Z)-octadecenoate + H(+). The catalysed reaction is 2-(9Z,12Z-octadecadienoyl)-glycerol + H2O = (9Z,12Z)-octadecadienoate + glycerol + H(+). It catalyses the reaction 1-(5Z,8Z,11Z,14Z-eicosatetraenoyl)-glycerol + H2O = glycerol + (5Z,8Z,11Z,14Z)-eicosatetraenoate + H(+). It carries out the reaction 1-(9Z,12Z-octadecadienoyl)-glycerol + H2O = (9Z,12Z)-octadecadienoate + glycerol + H(+). The enzyme catalyses 1-hexadecanoylglycerol + H2O = glycerol + hexadecanoate + H(+). The catalysed reaction is 1-octadecanoylglycerol + H2O = octadecanoate + glycerol + H(+). It catalyses the reaction prostaglandin E2 1-glyceryl ester + H2O = prostaglandin E2 + glycerol + H(+). It carries out the reaction prostaglandin D2-1-glycerol ester + H2O = prostaglandin D2 + glycerol + H(+). The enzyme catalyses 2-glyceryl-15-deoxy-Delta(12,14)-prostaglandin J2 + H2O = 15-deoxy-Delta(12,14)-prostaglandin J2 + glycerol + H(+). The catalysed reaction is prostaglandin F2alpha 1-glyceryl ester + H2O = prostaglandin F2alpha + glycerol + H(+). It functions in the pathway glycerolipid metabolism; triacylglycerol degradation. In terms of biological role, converts monoacylglycerides to free fatty acids and glycerol. Hydrolyzes the endocannabinoid 2-arachidonoylglycerol, and thereby contributes to the regulation of endocannabinoid signaling, nociperception and perception of pain. Regulates the levels of fatty acids that serve as signaling molecules and promote cancer cell migration, invasion and tumor growth. The sequence is that of Monoglyceride lipase from Homo sapiens (Human).